The following is a 313-amino-acid chain: ADP-L-glycero-D-manno-heptose-6-epimerase (313 aa).

NADP(+)-binding positions include 10 to 11, 31 to 32, K38, R53, 75 to 79, and N92; these read MI, DN, and EGACS. The active-site Proton acceptor is Y139. K143 is an NADP(+) binding site. N174 contributes to the substrate binding site. 2 residues coordinate NADP(+): V175 and K183. K183 serves as the catalytic Proton acceptor. Substrate contacts are provided by residues S185, H192, 206-209, R214, and Y277; that span reads FAGS.

The protein belongs to the NAD(P)-dependent epimerase/dehydratase family. HldD subfamily. In terms of assembly, homopentamer. NADP(+) serves as cofactor.

It carries out the reaction ADP-D-glycero-beta-D-manno-heptose = ADP-L-glycero-beta-D-manno-heptose. It participates in nucleotide-sugar biosynthesis; ADP-L-glycero-beta-D-manno-heptose biosynthesis; ADP-L-glycero-beta-D-manno-heptose from D-glycero-beta-D-manno-heptose 7-phosphate: step 4/4. The protein operates within bacterial outer membrane biogenesis; LPS core biosynthesis. Its function is as follows. Catalyzes the interconversion between ADP-D-glycero-beta-D-manno-heptose and ADP-L-glycero-beta-D-manno-heptose via an epimerization at carbon 6 of the heptose. The protein is ADP-L-glycero-D-manno-heptose-6-epimerase of Vibrio vulnificus (strain YJ016).